The chain runs to 144 residues: uncharacterized protein (144 aa).

The HIT domain occupies I13–F120. The Histidine triad motif motif lies at H105–H109.

This is an uncharacterized protein from Mycoplasma pneumoniae (strain ATCC 29342 / M129 / Subtype 1) (Mycoplasmoides pneumoniae).